Reading from the N-terminus, the 209-residue chain is Small ribosomal subunit protein uS4 (209 aa).

The S4 RNA-binding domain maps to 98–164 (RRLDNVVYRL…LPVKNAIELN (67 aa)).

The protein belongs to the universal ribosomal protein uS4 family. Part of the 30S ribosomal subunit. Contacts protein S5. The interaction surface between S4 and S5 is involved in control of translational fidelity.

Functionally, one of the primary rRNA binding proteins, it binds directly to 16S rRNA where it nucleates assembly of the body of the 30S subunit. In terms of biological role, with S5 and S12 plays an important role in translational accuracy. The chain is Small ribosomal subunit protein uS4 from Thermosipho africanus (strain TCF52B).